A 144-amino-acid chain; its full sequence is MAKRGGKRTVGVPYRFHVTPGIFMNSLVPVADNSGAKLVRVIGVVGHYSKTVHRRIPGAGVGDMVVVVVKEGKPELRRQIFRGIVVRQRRPYRRPDGTWVAFEDNAVVIVTPEGDPKGSEIHGPVAMEATLRWPTIANLASIVV.

Belongs to the universal ribosomal protein uL14 family. In terms of assembly, part of the 50S ribosomal subunit. Forms a cluster with proteins L3 and L24e, part of which may contact the 16S rRNA in 2 intersubunit bridges.

Binds to 23S rRNA. Forms part of two intersubunit bridges in the 70S ribosome. This Pyrobaculum arsenaticum (strain DSM 13514 / JCM 11321 / PZ6) protein is Large ribosomal subunit protein uL14.